The chain runs to 314 residues: Pathogenicity locus probable regulatory protein HrpR (314 aa).

The Sigma-54 factor interaction domain maps to 11 to 239; the sequence is TRWNVTALSA…LKSAANAICP (229 aa). ATP-binding positions include 39 to 46 and 101 to 110; these read GETGTGKD and SNGGTLYLDE. Residues 281 to 300 constitute a DNA-binding region (H-T-H motif); the sequence is FDAVLEELELPRRTLYHRMK.

Member of the two-component regulatory system HrpR/HrpS that regulates the activation of the sigma factor hrpL which itself induces the expression of hprD as well as other hrp loci which are involved in plant pathogenicity, hrmA and avr genes. Probably interacts with sigma-54. The polypeptide is Pathogenicity locus probable regulatory protein HrpR (hrpR) (Pseudomonas syringae pv. syringae).